The following is a 455-amino-acid chain: Dihydrolipoyllysine-residue succinyltransferase component of 2-oxoglutarate dehydrogenase complex, mitochondrial (455 aa).

A mitochondrion-targeting transit peptide spans 1–68 (MLSRSRCVSR…RFFRTTAVCK (68 aa)). Residues 71-145 (VITVKTPAFA…EGGTPLFTLR (75 aa)) enclose the Lipoyl-binding domain. Residue serine 82 is modified to Phosphoserine. Residue lysine 111 is modified to N6-lipoyllysine. A compositionally biased stretch (low complexity) spans 153–173 (KAKPAEAPAAAAPKAEPAVSA). A disordered region spans residues 153 to 214 (KAKPAEAPAA…KPTAAPPVAE (62 aa)). N6-acetyllysine is present on lysine 155. Residues 174–195 (VPPPPAASIPTQMPPVPSPPQP) are compositionally biased toward pro residues. Residues 221–453 (LRAEHREKMN…AVEDPRVLLL (233 aa)) are catalytic. N6-acetyllysine occurs at positions 269, 274, 275, 279, and 309. Active-site residues include histidine 426 and aspartate 430.

It belongs to the 2-oxoacid dehydrogenase family. The 2-oxoglutarate dehydrogenase complex is composed of OGDH (2-oxoglutarate dehydrogenase; E1), DLST (dihydrolipoamide succinyltransferase; E2), DLD (dihydrolipoamide dehydrogenase; E3) and the assembly factor KGD4. It contains multiple copies of the three enzymatic components (E1, E2 and E3). In the nucleus, the 2-oxoglutarate dehydrogenase complex associates with KAT2A. Interacts with ABHD11; this interaction maintains the functional lipoylation of the 2-oxoglutarate dehydrogenase complex. The cofactor is (R)-lipoate.

The protein resides in the mitochondrion matrix. It localises to the nucleus. It catalyses the reaction N(6)-[(R)-dihydrolipoyl]-L-lysyl-[protein] + succinyl-CoA = N(6)-[(R)-S(8)-succinyldihydrolipoyl]-L-lysyl-[protein] + CoA. Its pathway is amino-acid degradation; L-lysine degradation via saccharopine pathway; glutaryl-CoA from L-lysine: step 6/6. The protein operates within carbohydrate metabolism; tricarboxylic acid cycle. Dihydrolipoamide succinyltransferase (E2) component of the 2-oxoglutarate dehydrogenase complex. The 2-oxoglutarate dehydrogenase complex catalyzes the overall conversion of 2-oxoglutarate to succinyl-CoA and CO(2). The 2-oxoglutarate dehydrogenase complex is mainly active in the mitochondrion. A fraction of the 2-oxoglutarate dehydrogenase complex also localizes in the nucleus and is required for lysine succinylation of histones: associates with KAT2A on chromatin and provides succinyl-CoA to histone succinyltransferase KAT2A. This Sus scrofa (Pig) protein is Dihydrolipoyllysine-residue succinyltransferase component of 2-oxoglutarate dehydrogenase complex, mitochondrial.